We begin with the raw amino-acid sequence, 149 residues long: Protein SprT-like (149 aa).

One can recognise a SprT-like domain in the interval 6–147 (LQALVEQISI…VCGRCRSKLK (142 aa)). Zn(2+) is bound at residue His-67. The active site involves Glu-68. Residue His-71 coordinates Zn(2+).

Belongs to the SprT family. The cofactor is Zn(2+).

Its subcellular location is the cytoplasm. This chain is Protein SprT-like, found in Geobacillus kaustophilus (strain HTA426).